Consider the following 484-residue polypeptide: 3-isopropylmalate dehydratase large subunit (484 aa).

3 residues coordinate [4Fe-4S] cluster: Cys-352, Cys-412, and Cys-415. Residues 463 to 484 (TLSSPSDLDPAPASAAIRTDAA) are disordered. The segment covering 464-478 (LSSPSDLDPAPASAA) has biased composition (low complexity).

Belongs to the aconitase/IPM isomerase family. LeuC type 1 subfamily. In terms of assembly, heterodimer of LeuC and LeuD. It depends on [4Fe-4S] cluster as a cofactor.

The catalysed reaction is (2R,3S)-3-isopropylmalate = (2S)-2-isopropylmalate. Its pathway is amino-acid biosynthesis; L-leucine biosynthesis; L-leucine from 3-methyl-2-oxobutanoate: step 2/4. Functionally, catalyzes the isomerization between 2-isopropylmalate and 3-isopropylmalate, via the formation of 2-isopropylmaleate. This Pseudarthrobacter chlorophenolicus (strain ATCC 700700 / DSM 12829 / CIP 107037 / JCM 12360 / KCTC 9906 / NCIMB 13794 / A6) (Arthrobacter chlorophenolicus) protein is 3-isopropylmalate dehydratase large subunit.